Here is a 348-residue protein sequence, read N- to C-terminus: Alcohol dehydrogenase 2 (348 aa).

At Ser2 the chain carries N-acetylserine. Positions 44, 67, 98, 101, 104, 112, and 154 each coordinate Zn(2+). Residues 178–184 (GAAGGLG), Asp202, Lys207, 269–271 (VGL), and Arg341 each bind NAD(+).

It belongs to the zinc-containing alcohol dehydrogenase family. As to quaternary structure, homotetramer. Requires Zn(2+) as cofactor.

Its subcellular location is the cytoplasm. The catalysed reaction is a primary alcohol + NAD(+) = an aldehyde + NADH + H(+). It carries out the reaction a secondary alcohol + NAD(+) = a ketone + NADH + H(+). The sequence is that of Alcohol dehydrogenase 2 (ADH2) from Kluyveromyces marxianus (Yeast).